The primary structure comprises 2694 residues: Neurobeachin-like protein 1 (2694 aa).

Disordered stretches follow at residues 1289 to 1314 (VLMKDNDKNMSTEDTKKNSDEKTDEE), 1330 to 1350 (SLEDRHSLDSNTPLFPEDSSV), and 1381 to 1411 (CEMSDSGSQVPDSLPSTPSPVESTKSFSVHS). Over residues 1290–1314 (LMKDNDKNMSTEDTKKNSDEKTDEE) the composition is skewed to basic and acidic residues. The segment covering 1383–1409 (MSDSGSQVPDSLPSTPSPVESTKSFSV) has biased composition (polar residues). The region spanning 1883 to 1980 (DQKEKLVLME…VRNKIYSRLL (98 aa)) is the BEACH-type PH domain. A BEACH domain is found at 1992–2284 (RSPQELFKAS…QLLKEPHPPR (293 aa)). WD repeat units lie at residues 2439–2478 (RHMDIVTCLATDYCGIHLISGSRDTTCMIWQITQQGGVPV) and 2490–2531 (GHTN…RTLR).

This sequence belongs to the WD repeat neurobeachin family. In terms of tissue distribution, highly expressed in brain, kidney, prostate and testis. Weakly expressed in ovary, small intestine, colon and peripheral blood leukocytes. May be correlative to several tumors, such as ovary serous adenocarcinoma and metastasis mammary gland carcinoma breast.

The polypeptide is Neurobeachin-like protein 1 (NBEAL1) (Homo sapiens (Human)).